Consider the following 301-residue polypeptide: Hydroxymethylglutaryl-CoA lyase (301 aa).

In terms of domain architecture, Pyruvate carboxyltransferase spans 4–271 (VKVFEVGPRD…STGVDLEAVA (268 aa)). R12 is a substrate binding site. Positions 13, 204, and 206 each coordinate a divalent metal cation. Residue C237 is part of the active site. Residue N246 participates in a divalent metal cation binding.

This sequence belongs to the HMG-CoA lyase family.

The enzyme catalyses (3S)-3-hydroxy-3-methylglutaryl-CoA = acetoacetate + acetyl-CoA. The protein operates within metabolic intermediate metabolism; (S)-3-hydroxy-3-methylglutaryl-CoA degradation; acetoacetate from (S)-3-hydroxy-3-methylglutaryl-CoA: step 1/1. Functionally, involved in the catabolism of branched amino acids such as leucine. The sequence is that of Hydroxymethylglutaryl-CoA lyase (mvaB) from Pseudomonas mevalonii.